The following is a 361-amino-acid chain: Single-stranded DNA-binding protein 2 (361 aa).

The residue at position 6 (Lys-6) is an N6-acetyllysine. Positions 18–50 (AREKLALYVYEYLLHVGAQKSAQTFLSEIRWEK) constitute a LisH domain. Disordered stretches follow at residues 147-171 (GGVP…HPNM) and 194-361 (GAMR…TMSV). Over residues 204–219 (GGPGMPGMNMGPGGGR) the composition is skewed to gly residues. Over residues 225 to 236 (TNANSIPYSSAS) the composition is skewed to polar residues. Residues 246–256 (GGGPPGTPIMP) are compositionally biased toward pro residues. Gly residues predominate over residues 289–299 (GSDGPMGGLGG). Polar residues predominate over residues 317–332 (ISKNSPNNMSLSNQPG). Position 321 is a phosphoserine (Ser-321). Phosphothreonine is present on Thr-333. Polar residues predominate over residues 346–361 (NPFQSESYSPSMTMSV).

In terms of tissue distribution, ubiquitous.

Its subcellular location is the nucleus. This Homo sapiens (Human) protein is Single-stranded DNA-binding protein 2 (SSBP2).